The chain runs to 341 residues: N-acetyl-gamma-glutamyl-phosphate reductase (341 aa).

The active site involves C163.

The protein belongs to the NAGSA dehydrogenase family. Type 1 subfamily.

It is found in the cytoplasm. It catalyses the reaction N-acetyl-L-glutamate 5-semialdehyde + phosphate + NADP(+) = N-acetyl-L-glutamyl 5-phosphate + NADPH + H(+). It functions in the pathway amino-acid biosynthesis; L-arginine biosynthesis; N(2)-acetyl-L-ornithine from L-glutamate: step 3/4. In terms of biological role, catalyzes the NADPH-dependent reduction of N-acetyl-5-glutamyl phosphate to yield N-acetyl-L-glutamate 5-semialdehyde. This chain is N-acetyl-gamma-glutamyl-phosphate reductase, found in Idiomarina loihiensis (strain ATCC BAA-735 / DSM 15497 / L2-TR).